Here is a 162-residue protein sequence, read N- to C-terminus: Interleukin-15 (162 aa).

The signal sequence occupies residues 1-29 (MRILKPHLRSTSIQCYLCLLLNSHFLTEA). Positions 30 to 48 (GIHVFILGCISAGLPKTEA) are excised as a propeptide. Intrachain disulfides connect C83–C133 and C90–C136. A glycan (N-linked (GlcNAc...) asparagine) is linked at N108.

This sequence belongs to the IL-15/IL-21 family.

It is found in the secreted. Its function is as follows. Cytokine that plays a major role in the development of inflammatory and protective immune responses to microbial invaders and parasites by modulating immune cells of both the innate and adaptive immune systems. Stimulates the proliferation of natural killer cells, T-cells and B-cells and promotes the secretion of several cytokines. In monocytes, induces the production of IL8 and monocyte chemotactic protein 1/CCL2, two chemokines that attract neutrophils and monocytes respectively to sites of infection. Unlike most cytokines, which are secreted in soluble form, IL15 is expressed in association with its high affinity IL15RA on the surface of IL15-producing cells and delivers signals to target cells that express IL2RB and IL2RG receptor subunits. Binding to its receptor triggers the phosphorylation of JAK1 and JAK3 and the recruitment and subsequent phosphorylation of signal transducer and activator of transcription-3/STAT3 and STAT5. In mast cells, induces the rapid tyrosine phosphorylation of STAT6 and thereby controls mast cell survival and release of cytokines such as IL4. The chain is Interleukin-15 (IL15) from Ailuropoda melanoleuca (Giant panda).